A 1342-amino-acid chain; its full sequence is DNA-directed RNA polymerase subunit beta (1342 aa).

The protein belongs to the RNA polymerase beta chain family. As to quaternary structure, the RNAP catalytic core consists of 2 alpha, 1 beta, 1 beta' and 1 omega subunit. When a sigma factor is associated with the core the holoenzyme is formed, which can initiate transcription.

The enzyme catalyses RNA(n) + a ribonucleoside 5'-triphosphate = RNA(n+1) + diphosphate. Functionally, DNA-dependent RNA polymerase catalyzes the transcription of DNA into RNA using the four ribonucleoside triphosphates as substrates. The sequence is that of DNA-directed RNA polymerase subunit beta from Buchnera aphidicola subsp. Schizaphis graminum (strain Sg).